The sequence spans 427 residues: Phosphatidylinositol 4-phosphate 5-kinase 10 (427 aa).

Positions 1-419 constitute a PIPK domain; the sequence is MFTREITAKD…RFQDFVSQIF (419 aa). 2 disordered regions span residues 247 to 287 and 334 to 355; these read SRGS…DSEN and MKIP…VGKQ. Residues 379 to 400 are activation loop; that stretch reads YGVRKRLEHCYKSIQHSSKTIS.

The catalysed reaction is a 1,2-diacyl-sn-glycero-3-phospho-(1D-myo-inositol 4-phosphate) + ATP = a 1,2-diacyl-sn-glycero-3-phospho-(1D-myo-inositol-4,5-bisphosphate) + ADP + H(+). The chain is Phosphatidylinositol 4-phosphate 5-kinase 10 (PIP5K10) from Arabidopsis thaliana (Mouse-ear cress).